The chain runs to 299 residues: Endonuclease G, mitochondrial (299 aa).

The transit peptide at 1 to 48 (MQLLRAGLTLALGAGLGAAAESWWRQRADARATPGLLSRLPVLPVAAA) directs the protein to the mitochondrion. The residue at position 130 (Thr-130) is a Phosphothreonine. His-143 acts as the Proton acceptor in catalysis. Asn-174 serves as a coordination point for Mg(2+). Positions 288–298 (AGSLKAITAGS) are essential for deoxyribonuclease activity. Ser-290 carries the phosphoserine modification.

It belongs to the DNA/RNA non-specific endonuclease family. In terms of assembly, homodimer; disulfide-linked. Homodimerization is essential for its activity. Interacts with YWHAG. Requires Mg(2+) as cofactor. Post-translationally, GSK3-beta-mediated dual phosphorylations at Thr-130 and Ser-290 is necessary for its interaction with YWHAG and the induction of autophagy.

The protein localises to the mitochondrion. Its function is as follows. Endonuclease that preferentially catalyzes the cleavage of double-stranded 5-hydroxymethylcytosine (5hmC)-modified DNA. The 5hmC-modified nucleotide does not increase the binding affinity, but instead increases the efficiency of cutting and specifies the site of cleavage for the modified DNAs. Shows significantly higher affinity for four- stranded Holliday junction over duplex and single-stranded DNAs. Promotes conservative recombination when the DNA is 5hmC-modified. Promotes autophagy through the suppression of mTOR by its phosphorylation-mediated interaction with YWHAG and its endonuclease activity-mediated DNA damage response. GSK3-beta mediated phosphorylation of ENDOG enhances its interaction with YWHAG, leading to the release of TSC2 and PIK3C3 from YWHAG resulting in mTOR pathway suppression and autophagy initiation. Promotes cleavage of mtDNA in response to oxidative and nitrosative stress, in turn inducing compensatory mtDNA replication. The protein is Endonuclease G, mitochondrial (ENDOG) of Bos taurus (Bovine).